Reading from the N-terminus, the 904-residue chain is Translation initiation factor IF-2 (904 aa).

2 disordered regions span residues 134-248 (RQRN…GSHV) and 267-315 (HLSA…FERP). Basic and acidic residues predominate over residues 136–177 (RNLDEQQRLAESDRVRDEEIQRKRDEEQAAKDRAEAERKAAE). Low complexity-rich tracts occupy residues 178–230 (EAAA…STPA) and 285–303 (GRPG…RGSN). In terms of domain architecture, tr-type G spans 403-572 (TRPPVVTIMG…SLQAEVLELK (170 aa)). Residues 412–419 (GHVDHGKT) form a G1 region. Residue 412 to 419 (GHVDHGKT) participates in GTP binding. The G2 stretch occupies residues 437 to 441 (GITQH). The interval 458-461 (DTPG) is G3. Residues 458 to 462 (DTPGH) and 512 to 515 (NKID) each bind GTP. Residues 512–515 (NKID) are G4. Positions 548-550 (SAK) are G5.

This sequence belongs to the TRAFAC class translation factor GTPase superfamily. Classic translation factor GTPase family. IF-2 subfamily.

It localises to the cytoplasm. In terms of biological role, one of the essential components for the initiation of protein synthesis. Protects formylmethionyl-tRNA from spontaneous hydrolysis and promotes its binding to the 30S ribosomal subunits. Also involved in the hydrolysis of GTP during the formation of the 70S ribosomal complex. The protein is Translation initiation factor IF-2 of Xanthomonas oryzae pv. oryzae (strain PXO99A).